A 189-amino-acid polypeptide reads, in one-letter code: Putative manganese efflux pump MntP (189 aa).

Transmembrane regions (helical) follow at residues 3 to 23 (PVSL…AAIG), 41 to 61 (IIFG…GQAA), 65 to 85 (VADW…LHMI), 106 to 128 (WILA…GLAF), 141 to 161 (GLAT…LGAV), and 168 to 188 (MVGG…HLSA).

It belongs to the MntP (TC 9.B.29) family.

The protein resides in the cell inner membrane. Its function is as follows. Probably functions as a manganese efflux pump. The sequence is that of Putative manganese efflux pump MntP from Pseudomonas aeruginosa (strain LESB58).